The following is a 188-amino-acid chain: Acireductone dioxygenase (188 aa).

The Fe(2+) site is built by H97, H99, E103, and H141. Residues H97, H99, E103, and H141 each coordinate Ni(2+).

The protein belongs to the acireductone dioxygenase (ARD) family. In terms of assembly, monomer. Requires Fe(2+) as cofactor. The cofactor is Ni(2+).

It carries out the reaction 1,2-dihydroxy-5-(methylsulfanyl)pent-1-en-3-one + O2 = 3-(methylsulfanyl)propanoate + CO + formate + 2 H(+). The enzyme catalyses 1,2-dihydroxy-5-(methylsulfanyl)pent-1-en-3-one + O2 = 4-methylsulfanyl-2-oxobutanoate + formate + 2 H(+). The protein operates within amino-acid biosynthesis; L-methionine biosynthesis via salvage pathway; L-methionine from S-methyl-5-thio-alpha-D-ribose 1-phosphate: step 5/6. In terms of biological role, catalyzes 2 different reactions between oxygen and the acireductone 1,2-dihydroxy-3-keto-5-methylthiopentene (DHK-MTPene) depending upon the metal bound in the active site. Fe-containing acireductone dioxygenase (Fe-ARD) produces formate and 2-keto-4-methylthiobutyrate (KMTB), the alpha-ketoacid precursor of methionine in the methionine recycle pathway. Ni-containing acireductone dioxygenase (Ni-ARD) produces methylthiopropionate, carbon monoxide and formate, and does not lie on the methionine recycle pathway. This Xanthomonas euvesicatoria pv. vesicatoria (strain 85-10) (Xanthomonas campestris pv. vesicatoria) protein is Acireductone dioxygenase.